We begin with the raw amino-acid sequence, 837 residues long: MARGERRRRAVPAEGVRTAERAARGGPGRRDGRGGGPRSTAGGVALAVVVLSLALGMSGRWVLAWYRARRAVTLHSAPPVLPADSSSPAVAPDLFWGTYRPHVYFGMKTRSPKPLLTGLMWAQQGTTPGTPKLRHTCEQGDGVGPYGWEFHDGLSFGRQHIQDGALRLTTEFVKRPGGQHGGDWSWRVTVEPQDSGTSALPLVSLFFYVVTDGKEVLLPEVGAKGQLKFISGHTSELGDFRFTLLPPTSPGDTAPKYGSYNVFWTSNPGLPLLTEMVKSRLNSWFQHRPPGAPPERYLGLPGSLKWEDRGPSGQGQGQFLIQQVTLKIPISIEFVFESGSAQAGGNQALPRLAGSLLTQALESHAEGFRERFEKTFQLKEKGLSSGEQVLGQAALSGLLGGIGYFYGQGLVLPDIGVEGSEQKVDPALFPPVPLFTAVPSRSFFPRGFLWDEGFHQLVVQRWDPSLTREALGHWLGLLNADGWIGREQILGDEARARVPPEFLVQRAVHANPPTLLLPVAHMLEVGDPDDLAFLRKALPRLHAWFSWLHQSQAGPLPLSYRWRGRDPALPTLLNPKTLPSGLDDYPRASHPSVTERHLDLRCWVALGARVLTRLAEHLGEAEVAAELGPLAASLEAAESLDELHWAPELGVFADFGNHTKAVQLKPRPPQGLVRVVGRPQPQLQYVDALGYVSLFPLLLRLLDPTSSRLGPLLDILADSRHLWSPFGLRSLAASSSFYGQRNSEHDPPYWRGAVWLNVNYLALGALHHYGHLEGPHQARAAKLHGELRANVVGNVWRQYQATGFLWEQYSDRDGRGMGCRPFHGWTSLVLLAMAEDY.

The span at 1 to 10 shows a compositional bias: basic residues; the sequence is MARGERRRRA. The Cytoplasmic segment spans residues 1–38; sequence MARGERRRRAVPAEGVRTAERAARGGPGRRDGRGGGPR. The segment at 1-39 is disordered; that stretch reads MARGERRRRAVPAEGVRTAERAARGGPGRRDGRGGGPRS. The short motif at 3 to 9 is the Endoplasmic reticulum targeting element; sequence RGERRRR. Positions 17–33 are enriched in basic and acidic residues; that stretch reads RTAERAARGGPGRRDGR. A helical; Signal-anchor for type II membrane protein transmembrane segment spans residues 39–59; that stretch reads STAGGVALAVVVLSLALGMSG. At 60 to 837 the chain is on the lumenal side; it reads RWVLAWYRAR…LVLLAMAEDY (778 aa). Positions 76-137 are required for endoplasmic reticulum targeting; sequence SAPPVLPADS…PGTPKLRHTC (62 aa). Catalysis depends on D583, which acts as the Proton donor. N-linked (GlcNAc...) asparagine glycosylation occurs at N657. The Proton acceptor role is filled by E807.

Belongs to the glycosyl hydrolase 63 family.

The protein localises to the endoplasmic reticulum membrane. It catalyses the reaction N(4)-(alpha-D-Glc-(1-&gt;2)-alpha-D-Glc-(1-&gt;3)-alpha-D-Glc-(1-&gt;3)-alpha-D-Man-(1-&gt;2)-alpha-D-Man-(1-&gt;2)-alpha-D-Man-(1-&gt;3)-[alpha-D-Man-(1-&gt;2)-alpha-D-Man-(1-&gt;3)-[alpha-D-Man-(1-&gt;2)-alpha-D-Man-(1-&gt;6)]-alpha-D-Man-(1-&gt;6)]-beta-D-Man-(1-&gt;4)-beta-D-GlcNAc-(1-&gt;4)-beta-D-GlcNAc)-L-asparaginyl-[protein] + H2O = N(4)-(alpha-D-Glc-(1-&gt;3)-alpha-D-Glc-(1-&gt;3)-alpha-D-Man-(1-&gt;2)-alpha-D-Man-(1-&gt;2)-alpha-D-Man-(1-&gt;3)-[alpha-D-Man-(1-&gt;2)-alpha-D-Man-(1-&gt;3)-[alpha-D-Man-(1-&gt;2)-alpha-D-Man-(1-&gt;6)]-alpha-D-Man-(1-&gt;6)]-beta-D-Man-(1-&gt;4)-beta-D-GlcNAc-(1-&gt;4)-beta-D-GlcNAc)-L-asparaginyl-[protein] + beta-D-glucose. The protein operates within glycan metabolism; N-glycan degradation. With respect to regulation, inhibited by 1-deoxynojirimycin (40% inhibition) and N,N-dimethyl-deoxynojirimycin (85% inhibition). Its function is as follows. In the context of N-glycan degradation, cleaves the distal alpha 1,2-linked glucose residue from the Glc(3)Man(9)GlcNAc(2) oligosaccharide precursor in a highly specific manner. In Homo sapiens (Human), this protein is Mannosyl-oligosaccharide glucosidase.